We begin with the raw amino-acid sequence, 435 residues long: MTTFSPREIVSELDRYIIGQNDAKRAVAIALRNRWRRQQLDESLRDEVMPKNILMIGPTGVGKTEISRRLAKLAGAPFIKVEATKFTEVGYVGRDVEQIIRDLVEIGIGLIKEKKRLEVEAKAHAGAEERVLDALVGATASPATRDSFRKKLRAGELDDKEIDIEVAETSSGMPGFEIPGMPGANVGILNLSDMFGKAMGGRTKKVRTTVKTSYADLIRDESDKLIDNEVIQREAVKSVENDGIVFLDEIDKIANREGAMGAGVSREGVQRDLLPLVEGTTVATKYGPVKTDHILFIASGAFHVSKPSDLLPELQGRLPIRVELKALTKEDFRRILTETEASLIRQYIALMATEQLDLEFTEDAIDALADVAVNLNSSIENIGARRLQTVMERVLYDISFNAPDRGGAKVMIDSAYVREHVGEIAADADLSRYIL.

ATP-binding positions include I18, 60–65, D248, E313, and R385; that span reads GVGKTE.

Belongs to the ClpX chaperone family. HslU subfamily. In terms of assembly, a double ring-shaped homohexamer of HslV is capped on each side by a ring-shaped HslU homohexamer. The assembly of the HslU/HslV complex is dependent on binding of ATP.

It is found in the cytoplasm. In terms of biological role, ATPase subunit of a proteasome-like degradation complex; this subunit has chaperone activity. The binding of ATP and its subsequent hydrolysis by HslU are essential for unfolding of protein substrates subsequently hydrolyzed by HslV. HslU recognizes the N-terminal part of its protein substrates and unfolds these before they are guided to HslV for hydrolysis. In Allorhizobium ampelinum (strain ATCC BAA-846 / DSM 112012 / S4) (Agrobacterium vitis (strain S4)), this protein is ATP-dependent protease ATPase subunit HslU.